The chain runs to 128 residues: Sulfurtransferase TusD (128 aa).

The Cysteine persulfide intermediate role is filled by cysteine 78.

The protein belongs to the DsrE/TusD family. As to quaternary structure, heterohexamer, formed by a dimer of trimers. The hexameric TusBCD complex contains 2 copies each of TusB, TusC and TusD. The TusBCD complex interacts with TusE.

Its subcellular location is the cytoplasm. Functionally, part of a sulfur-relay system required for 2-thiolation of 5-methylaminomethyl-2-thiouridine (mnm(5)s(2)U) at tRNA wobble positions. Accepts sulfur from TusA and transfers it in turn to TusE. This chain is Sulfurtransferase TusD, found in Citrobacter koseri (strain ATCC BAA-895 / CDC 4225-83 / SGSC4696).